The following is a 217-amino-acid chain: 3,4-dihydroxy-2-butanone 4-phosphate synthase (217 aa).

D-ribulose 5-phosphate contacts are provided by residues 37 to 38 (RE), aspartate 42, 150 to 154 (RRGHT), and glutamate 174. Residue glutamate 38 participates in Mg(2+) binding. Position 153 (histidine 153) interacts with Mg(2+).

Belongs to the DHBP synthase family. In terms of assembly, homodimer. The cofactor is Mg(2+). Requires Mn(2+) as cofactor.

The enzyme catalyses D-ribulose 5-phosphate = (2S)-2-hydroxy-3-oxobutyl phosphate + formate + H(+). The protein operates within cofactor biosynthesis; riboflavin biosynthesis; 2-hydroxy-3-oxobutyl phosphate from D-ribulose 5-phosphate: step 1/1. Functionally, catalyzes the conversion of D-ribulose 5-phosphate to formate and 3,4-dihydroxy-2-butanone 4-phosphate. The protein is 3,4-dihydroxy-2-butanone 4-phosphate synthase of Syntrophotalea carbinolica (strain DSM 2380 / NBRC 103641 / GraBd1) (Pelobacter carbinolicus).